The sequence spans 106 residues: Large ribosomal subunit protein uL22 (106 aa).

The protein belongs to the universal ribosomal protein uL22 family. Part of the 50S ribosomal subunit.

Functionally, this protein binds specifically to 23S rRNA; its binding is stimulated by other ribosomal proteins, e.g. L4, L17, and L20. It is important during the early stages of 50S assembly. It makes multiple contacts with different domains of the 23S rRNA in the assembled 50S subunit and ribosome. The globular domain of the protein is located near the polypeptide exit tunnel on the outside of the subunit, while an extended beta-hairpin is found that lines the wall of the exit tunnel in the center of the 70S ribosome. In Nautilia profundicola (strain ATCC BAA-1463 / DSM 18972 / AmH), this protein is Large ribosomal subunit protein uL22.